A 149-amino-acid chain; its full sequence is MERTYLMVKPDGVQRGLIGQIISKFEQKGYKIVGLKMMQISREVAERHYGEHAGKPFFNGLVDFITSGPVVAMVIEGKDVVTTAREMMGATNPLKAAPGTIRATFGVDVGRNIIHGSDSLESAQREIGIFFKSEELIDYDRAIDTWIYE.

Positions 9, 57, 85, 91, 102, and 112 each coordinate ATP. Residue His-115 is the Pros-phosphohistidine intermediate of the active site.

Belongs to the NDK family. In terms of assembly, homotetramer. Mg(2+) serves as cofactor.

The protein localises to the cytoplasm. It catalyses the reaction a 2'-deoxyribonucleoside 5'-diphosphate + ATP = a 2'-deoxyribonucleoside 5'-triphosphate + ADP. The catalysed reaction is a ribonucleoside 5'-diphosphate + ATP = a ribonucleoside 5'-triphosphate + ADP. Its function is as follows. Major role in the synthesis of nucleoside triphosphates other than ATP. The ATP gamma phosphate is transferred to the NDP beta phosphate via a ping-pong mechanism, using a phosphorylated active-site intermediate. This Desulforamulus reducens (strain ATCC BAA-1160 / DSM 100696 / MI-1) (Desulfotomaculum reducens) protein is Nucleoside diphosphate kinase.